Consider the following 105-residue polypeptide: Thioredoxin (105 aa).

A Thioredoxin domain is found at 2–105 (VKQIESKSAF…KLEATINELL (104 aa)). N6-acetyllysine is present on Lys-3. Residue Lys-8 is modified to N6-succinyllysine. Catalysis depends on nucleophile residues Cys-32 and Cys-35. A disulfide bond links Cys-32 and Cys-35. Lys-39 carries the post-translational modification N6-acetyllysine. 2 positions are modified to S-nitrosocysteine: Cys-62 and Cys-69. S-nitrosocysteine; alternate is present on Cys-73. Lys-94 carries the N6-acetyllysine; alternate modification. An N6-succinyllysine; alternate modification is found at Lys-94.

This sequence belongs to the thioredoxin family. Homodimer; disulfide-linked. Interacts with TXNIP through the redox-active site. Interacts with MAP3K5 and CASP3. Interacts with APEX1; the interaction stimulates the FOS/JUN AP-1 DNA-binding activity in a redox-dependent manner. In terms of processing, in the fully reduced protein, both Cys-69 and Cys-73 are nitrosylated in response to nitric oxide (NO). When two disulfide bonds are present in the protein, only Cys-73 is nitrosylated. Cys-73 can serve as donor for nitrosylation of target proteins.

It localises to the nucleus. The protein localises to the cytoplasm. Its subcellular location is the secreted. In terms of biological role, participates in various redox reactions through the reversible oxidation of its active center dithiol to a disulfide and catalyzes dithiol-disulfide exchange reactions. Plays a role in the reversible S-nitrosylation of cysteine residues in target proteins, and thereby contributes to the response to intracellular nitric oxide. Nitrosylates the active site Cys of CASP3 in response to nitric oxide (NO), and thereby inhibits caspase-3 activity. Induces the FOS/JUN AP-1 DNA binding activity in ionizing radiation (IR) cells through its oxidation/reduction status and stimulates AP-1 transcriptional activity. In Oryctolagus cuniculus (Rabbit), this protein is Thioredoxin (TXN).